A 142-amino-acid polypeptide reads, in one-letter code: Transcription antitermination protein NusB (142 aa).

It belongs to the NusB family.

Functionally, involved in transcription antitermination. Required for transcription of ribosomal RNA (rRNA) genes. Binds specifically to the boxA antiterminator sequence of the ribosomal RNA (rrn) operons. The protein is Transcription antitermination protein NusB of Borreliella burgdorferi (strain ATCC 35210 / DSM 4680 / CIP 102532 / B31) (Borrelia burgdorferi).